The following is a 652-amino-acid chain: DNA ligase (652 aa).

NAD(+) contacts are provided by residues 29 to 33, 78 to 79, and Glu-107; these read DSEYD and SL. The active-site N6-AMP-lysine intermediate is Lys-109. Arg-130, Glu-164, Lys-278, and Lys-302 together coordinate NAD(+). Residues Cys-395, Cys-398, Cys-413, and Cys-418 each contribute to the Zn(2+) site. Residues 577–652 form the BRCT domain; it reads VADAALSGLT…VRDEAWLESL (76 aa).

It belongs to the NAD-dependent DNA ligase family. LigA subfamily. Mg(2+) serves as cofactor. Requires Mn(2+) as cofactor.

It carries out the reaction NAD(+) + (deoxyribonucleotide)n-3'-hydroxyl + 5'-phospho-(deoxyribonucleotide)m = (deoxyribonucleotide)n+m + AMP + beta-nicotinamide D-nucleotide.. Functionally, DNA ligase that catalyzes the formation of phosphodiester linkages between 5'-phosphoryl and 3'-hydroxyl groups in double-stranded DNA using NAD as a coenzyme and as the energy source for the reaction. It is essential for DNA replication and repair of damaged DNA. The chain is DNA ligase from Streptococcus pneumoniae (strain JJA).